A 503-amino-acid chain; its full sequence is Palmitoleoyl-protein carboxylesterase NOTUM (503 aa).

Residues 1–19 (MGGEVRVLLLLGLLHWVGG) form the signal peptide. Residues 23–53 (RKTWRRRGQQPPQPPPPPPLPQRAEVEPGAG) are disordered. Residues 33 to 43 (PPQPPPPPPLP) are compositionally biased toward pro residues. At Ser-88 the chain carries Phosphoserine. An N-linked (GlcNAc...) asparagine glycan is attached at Asn-103. Active-site charge relay system residues include Ser-239, Asp-347, and His-396.

Belongs to the pectinacetylesterase family. Notum subfamily. As to expression, widely expressed. Expressed in lung, ovary, kidney, liver and brain. Not detected in thymus, heart, spleen, stomach, skeletal muscle and bone marrow.

The protein localises to the secreted. It catalyses the reaction [Wnt protein]-O-(9Z)-hexadecenoyl-L-serine + H2O = [Wnt protein]-L-serine + (9Z)-hexadecenoate + H(+). Functionally, carboxylesterase that acts as a key negative regulator of the Wnt signaling pathway by specifically mediating depalmitoleoylation of WNT proteins. Serine palmitoleoylation of WNT proteins is required for efficient binding to frizzled receptors. This chain is Palmitoleoyl-protein carboxylesterase NOTUM, found in Mus musculus (Mouse).